The primary structure comprises 178 residues: ATP synthase subunit delta (178 aa).

This sequence belongs to the ATPase delta chain family. As to quaternary structure, F-type ATPases have 2 components, F(1) - the catalytic core - and F(0) - the membrane proton channel. F(1) has five subunits: alpha(3), beta(3), gamma(1), delta(1), epsilon(1). F(0) has three main subunits: a(1), b(2) and c(10-14). The alpha and beta chains form an alternating ring which encloses part of the gamma chain. F(1) is attached to F(0) by a central stalk formed by the gamma and epsilon chains, while a peripheral stalk is formed by the delta and b chains.

Its subcellular location is the cell inner membrane. In terms of biological role, f(1)F(0) ATP synthase produces ATP from ADP in the presence of a proton or sodium gradient. F-type ATPases consist of two structural domains, F(1) containing the extramembraneous catalytic core and F(0) containing the membrane proton channel, linked together by a central stalk and a peripheral stalk. During catalysis, ATP synthesis in the catalytic domain of F(1) is coupled via a rotary mechanism of the central stalk subunits to proton translocation. Functionally, this protein is part of the stalk that links CF(0) to CF(1). It either transmits conformational changes from CF(0) to CF(1) or is implicated in proton conduction. The protein is ATP synthase subunit delta of Nitrosospira multiformis (strain ATCC 25196 / NCIMB 11849 / C 71).